The chain runs to 348 residues: Phenylalanine--tRNA ligase alpha subunit (348 aa).

Glu259 lines the Mg(2+) pocket.

Belongs to the class-II aminoacyl-tRNA synthetase family. Phe-tRNA synthetase alpha subunit type 1 subfamily. Tetramer of two alpha and two beta subunits. It depends on Mg(2+) as a cofactor.

The protein localises to the cytoplasm. It catalyses the reaction tRNA(Phe) + L-phenylalanine + ATP = L-phenylalanyl-tRNA(Phe) + AMP + diphosphate + H(+). In Lactiplantibacillus plantarum (strain ATCC BAA-793 / NCIMB 8826 / WCFS1) (Lactobacillus plantarum), this protein is Phenylalanine--tRNA ligase alpha subunit.